The sequence spans 57 residues: Potassium channel toxin alpha-KTx 17.2 (57 aa).

The N-terminal stretch at 1 to 26 (MKTIIVLLLLTIVAAAVVESSPKARR) is a signal peptide. Intrachain disulfides connect C30/C46, C36/C51, and C40/C53.

Belongs to the short scorpion toxin superfamily. Potassium channel inhibitor family. Alpha-KTx 17 subfamily. As to expression, expressed by the venom gland.

It localises to the secreted. Functionally, inhibits voltage-gated potassium channels. This is Potassium channel toxin alpha-KTx 17.2 from Lychas mucronatus (Chinese swimming scorpion).